A 501-amino-acid chain; its full sequence is Cytochrome P450 monooxygeanse terP (501 aa).

Residues 2 to 22 (PSLLLSLLLLQVPIICAWLLV) traverse the membrane as a helical segment. Residue Cys441 coordinates heme.

It belongs to the cytochrome P450 family. Heme is required as a cofactor.

It localises to the membrane. The protein operates within secondary metabolite biosynthesis. In terms of biological role, cytochrome P450 monooxygeanse; part of the gene cluster that mediates the biosynthesis of terpendoles, indole-diterpene (IDT) mycotoxins including terpendole I, terpendole K, terpendole C, as well as the kinesin Eg5 inhibitor terpendole E. TerP has dual activity and is able to convert terpendole E to 13-desoxyterpendole I and paspaline to 13-desoxypaxilline. Terpendoles biosynthesis begins with the synthesis of geranylgeranyl diphosphate (GGPP) by a yet unidentified GGPP synthase. Condensation of indole-3-glycerol phosphate with GGPP by the prenyltransferase terC then forms 3-geranylgeranylindole (3-GGI), followed by epoxidation and cyclization of this intermediate (by the FAD-dependent monooxygeanse terM and the terpene cyclase terB) to form paspaline. The cytochrome monooxygenase terQ then hydroxylates paspalline at C-11 to yield terpendole E. The cytochrome monooxygenase terP converts terpendole E to 13-desoxyterpendole I, and terQ converts 13-desoxyterpendole I into terpendole I. TerF and terK are required for conversion of terpendole I to terpendole C which is further converted to terpendole K. The chain is Cytochrome P450 monooxygeanse terP from Tolypocladium album (Soil fungus).